Reading from the N-terminus, the 1230-residue chain is Potassium channel subfamily T member 1 (1230 aa).

Positions M1–L37 are disordered. The Cytoplasmic segment spans residues M1 to S93. Residues L94 to C126 form a helical membrane-spanning segment. Over W127 to R153 the chain is Extracellular. 2 N-linked (GlcNAc...) asparagine glycosylation sites follow: N133 and N137. A helical membrane pass occupies residues K154–L178. Residues S179–S192 lie on the Cytoplasmic side of the membrane. Residues F193–F208 traverse the membrane as a helical segment. The Extracellular segment spans residues W209–L215. A helical transmembrane segment spans residues F216 to M233. Residues I234–S246 are Cytoplasmic-facing. Residues A247 to E274 traverse the membrane as a helical segment. The Extracellular segment spans residues R275–S281. An intramembrane region (pore-forming) is located at residues L282–T302. Positions 296 and 297 each coordinate K(+). Topologically, residues P303–K304 are extracellular. A helical membrane pass occupies residues I305 to Q338. The Cytoplasmic segment spans residues K339 to L1230. The RCK N-terminal 1 domain maps to E352–V488. Na(+)-binding residues include L513, H516, S538, and N540. The segment at T660–P689 is disordered. Zn(2+) is bound by residues C758 and C759. 2 residues coordinate K(+): R761 and K764. Na(+)-binding residues include R761 and K764. The Zn(2+) site is built by C766 and H768. Residues N769, Y771, Y777, and G778 each coordinate K(+). Y771 provides a ligand contact to Na(+). Residue F779 participates in Na(+) binding. The 141-residue stretch at N781–L921 folds into the RCK N-terminal 2 domain. The K(+) site is built by S787, L818, D820, G842, and D865. 2 disordered regions span residues E1048–L1078 and S1204–L1230. A compositionally biased stretch (gly residues) spans A1057–D1072. Positions S1204–S1219 are enriched in low complexity.

Belongs to the potassium channel family. Calcium-activated (TC 1.A.1.3) subfamily. KCa4.1/KCNT1 sub-subfamily. Homotetramer; which constitutes the Na(+)-activated K(+) channel. Interacts with KCNT2; these heterodimer channels differ from the homomers in their unitary conductance, kinetic behavior, subcellular localization, and response to activation of protein kinase C. Interacts (via C-terminus) with FMR1; this interaction alters gating properties of KCNT1. Interacts with CRBN via its cytoplasmic C-terminus. In terms of processing, phosphorylated by protein kinase C. Phosphorylation of the C-terminal domain increases channel activity. As to expression, highest expression in liver, brain and spinal cord. Lowest expression in skeletal muscle.

Its subcellular location is the cell membrane. The enzyme catalyses K(+)(in) = K(+)(out). Activated by high intracellular Na(+). In addition to activation by Na(+), is cooperatively activated by intracellular Cl(-) levels. Inhibited by Zn(2+). Activated upon stimulation of G-protein coupled receptors, such as CHRM1 and GRIA1. Functionally, sodium-activated K(+) channel. Acts as an important mediator of neuronal membrane excitability. Contributes to the delayed outward currents. Regulates neuronal bursting in sensory neurons. Contributes to synaptic development and plasticity. This Homo sapiens (Human) protein is Potassium channel subfamily T member 1.